A 418-amino-acid chain; its full sequence is Transcription termination factor Rho (418 aa).

Residues 48-123 (DIYGDGVLEI…LKVNDINFDR (76 aa)) form the Rho RNA-BD domain. ATP contacts are provided by residues 169–174 (GKGQRG), 181–186 (KAGKTM), and Arg212.

Belongs to the Rho family. In terms of assembly, homohexamer. The homohexamer assembles into an open ring structure.

Its function is as follows. Facilitates transcription termination by a mechanism that involves Rho binding to the nascent RNA, activation of Rho's RNA-dependent ATPase activity, and release of the mRNA from the DNA template. This chain is Transcription termination factor Rho, found in Allochromatium vinosum (strain ATCC 17899 / DSM 180 / NBRC 103801 / NCIMB 10441 / D) (Chromatium vinosum).